Reading from the N-terminus, the 410-residue chain is Maintenance of mitochondrial morphology protein 1 (410 aa).

The Lumenal segment spans residues Met1–Gly19. The helical transmembrane segment at Leu20–Phe40 threads the bilayer. Over Gly41–Asp410 the chain is Cytoplasmic. The segment covering Leu71 to Leu87 has biased composition (polar residues). The interval Leu71–Gly98 is disordered. An SMP-LTD domain is found at Gln119–Pro335. The disordered stretch occupies residues Ala380–Asp410. Residues Asp387–Asp398 are compositionally biased toward basic and acidic residues.

This sequence belongs to the MMM1 family. As to quaternary structure, homodimer. Component of the ER-mitochondria encounter structure (ERMES) or MDM complex, composed of MMM1, MDM10, MDM12 and MDM34. An MMM1 homodimer associates with one molecule of MDM12 on each side in a pairwise head-to-tail manner, and the SMP-LTD domains of MMM1 and MDM12 generate a continuous hydrophobic tunnel for phospholipid trafficking.

The protein resides in the endoplasmic reticulum membrane. In terms of biological role, component of the ERMES/MDM complex, which serves as a molecular tether to connect the endoplasmic reticulum (ER) and mitochondria. Components of this complex are involved in the control of mitochondrial shape and protein biogenesis, and function in nonvesicular lipid trafficking between the ER and mitochondria. The MDM12-MMM1 subcomplex functions in the major beta-barrel assembly pathway that is responsible for biogenesis of all outer membrane beta-barrel proteins, and acts in a late step after the SAM complex. The MDM10-MDM12-MMM1 subcomplex further acts in the TOM40-specific pathway after the action of the MDM12-MMM1 complex. Essential for establishing and maintaining the structure of mitochondria and maintenance of mtDNA nucleoids. The sequence is that of Maintenance of mitochondrial morphology protein 1 from Pyricularia oryzae (strain 70-15 / ATCC MYA-4617 / FGSC 8958) (Rice blast fungus).